We begin with the raw amino-acid sequence, 461 residues long: Cysteine--tRNA ligase (461 aa).

C28 is a binding site for Zn(2+). Residues 30–40 (ITVYDLCHIGH) carry the 'HIGH' region motif. Zn(2+) is bound by residues C209, H234, and E238. The short motif at 266–270 (KMSKS) is the 'KMSKS' region element. K269 provides a ligand contact to ATP.

This sequence belongs to the class-I aminoacyl-tRNA synthetase family. As to quaternary structure, monomer. It depends on Zn(2+) as a cofactor.

Its subcellular location is the cytoplasm. It catalyses the reaction tRNA(Cys) + L-cysteine + ATP = L-cysteinyl-tRNA(Cys) + AMP + diphosphate. This Cronobacter sakazakii (strain ATCC BAA-894) (Enterobacter sakazakii) protein is Cysteine--tRNA ligase.